The sequence spans 115 residues: NADH-ubiquinone oxidoreductase chain 3 (115 aa).

3 helical membrane-spanning segments follow: residues Leu-3 to Trp-23, Phe-55 to Ile-75, and Leu-87 to Leu-107.

Belongs to the complex I subunit 3 family. As to quaternary structure, core subunit of respiratory chain NADH dehydrogenase (Complex I) which is composed of 45 different subunits. Interacts with TMEM186. Interacts with TMEM242.

Its subcellular location is the mitochondrion inner membrane. It catalyses the reaction a ubiquinone + NADH + 5 H(+)(in) = a ubiquinol + NAD(+) + 4 H(+)(out). In terms of biological role, core subunit of the mitochondrial membrane respiratory chain NADH dehydrogenase (Complex I) which catalyzes electron transfer from NADH through the respiratory chain, using ubiquinone as an electron acceptor. Essential for the catalytic activity of complex I. This chain is NADH-ubiquinone oxidoreductase chain 3, found in Ornithorhynchus anatinus (Duckbill platypus).